We begin with the raw amino-acid sequence, 66 residues long: Kappa-flavitoxin (66 aa).

Intrachain disulfides connect cysteine 3-cysteine 21, cysteine 14-cysteine 42, cysteine 27-cysteine 31, cysteine 46-cysteine 58, and cysteine 59-cysteine 64.

This sequence belongs to the three-finger toxin family. Long-chain subfamily. Kappa-neurotoxin sub-subfamily. Homo- and heterodimer; non-covalently linked. Expressed by the venom gland.

It is found in the secreted. Functionally, postsynaptic neurotoxin that binds and inhibits neuronal nicotinic acetylcholine receptors (nAChR) with high affinity (IC(50)&lt;100 nM). Is a selective, and slowly reversible antagonist of alpha-3/CHRNA3-containing and some alpha-4/CHRNA4-containing AChRs. The polypeptide is Kappa-flavitoxin (Bungarus flaviceps flaviceps (Red-headed krait)).